The sequence spans 569 residues: Sulfite reductase [NADPH] hemoprotein beta-component (569 aa).

Positions 433, 439, 478, and 482 each coordinate [4Fe-4S] cluster. Residue Cys-482 coordinates siroheme.

Belongs to the nitrite and sulfite reductase 4Fe-4S domain family. As to quaternary structure, alpha(8)-beta(8). The alpha component is a flavoprotein, the beta component is a hemoprotein. Siroheme is required as a cofactor. Requires [4Fe-4S] cluster as cofactor.

It catalyses the reaction hydrogen sulfide + 3 NADP(+) + 3 H2O = sulfite + 3 NADPH + 4 H(+). It functions in the pathway sulfur metabolism; hydrogen sulfide biosynthesis; hydrogen sulfide from sulfite (NADPH route): step 1/1. Component of the sulfite reductase complex that catalyzes the 6-electron reduction of sulfite to sulfide. This is one of several activities required for the biosynthesis of L-cysteine from sulfate. This Shewanella sediminis (strain HAW-EB3) protein is Sulfite reductase [NADPH] hemoprotein beta-component.